The sequence spans 891 residues: Protein kinase kin1 (891 aa).

A disordered region spans residues 65 to 116 (GYISPSSQSPHHGPVRSPSSRKPLPASPSRTRDHSLRVPVSGHSYSADEKPR). In terms of domain architecture, Protein kinase spans 125 to 395 (YVLGKTIGAG…LEEVLNHPWM (271 aa)). Residues 131 to 139 (IGAGSMGKV) and Lys154 each bind ATP. The Proton acceptor role is filled by Asp266. Thr528 bears the Phosphothreonine mark. Disordered stretches follow at residues 528–699 (TPVS…RNNR), 728–747 (TMGN…TDKL), and 805–841 (TPTK…LDDN). 2 stretches are compositionally biased toward low complexity: residues 529 to 538 (PVSSVPSSPV) and 583 to 603 (HSPS…IFRR). Ser535 and Ser536 each carry phosphoserine. 5 stretches are compositionally biased toward polar residues: residues 612-629 (KSST…TSQS), 649-659 (LVTQSAIGRST), 669-699 (ISSQ…RNNR), 728-742 (TMGN…SPSK), and 820-829 (YGSNSTTDSY). The region spanning 842–891 (GESPASNLAFEIYIVKVPILSLRGVSFHRISGNSWQYKTLASRILNELKL) is the KA1 domain.

Belongs to the protein kinase superfamily. Ser/Thr protein kinase family.

It localises to the cytoplasm. The enzyme catalyses L-seryl-[protein] + ATP = O-phospho-L-seryl-[protein] + ADP + H(+). It catalyses the reaction L-threonyl-[protein] + ATP = O-phospho-L-threonyl-[protein] + ADP + H(+). Has a role in establishing the characteristic rod cell shape. Important for cell polarity and is involved in directing growth to the cell ends. The protein is Protein kinase kin1 (kin1) of Schizosaccharomyces pombe (strain 972 / ATCC 24843) (Fission yeast).